The sequence spans 162 residues: SsrA-binding protein (162 aa).

A disordered region spans residues D140–G162.

This sequence belongs to the SmpB family.

It is found in the cytoplasm. Required for rescue of stalled ribosomes mediated by trans-translation. Binds to transfer-messenger RNA (tmRNA), required for stable association of tmRNA with ribosomes. tmRNA and SmpB together mimic tRNA shape, replacing the anticodon stem-loop with SmpB. tmRNA is encoded by the ssrA gene; the 2 termini fold to resemble tRNA(Ala) and it encodes a 'tag peptide', a short internal open reading frame. During trans-translation Ala-aminoacylated tmRNA acts like a tRNA, entering the A-site of stalled ribosomes, displacing the stalled mRNA. The ribosome then switches to translate the ORF on the tmRNA; the nascent peptide is terminated with the 'tag peptide' encoded by the tmRNA and targeted for degradation. The ribosome is freed to recommence translation, which seems to be the essential function of trans-translation. The chain is SsrA-binding protein from Roseobacter denitrificans (strain ATCC 33942 / OCh 114) (Erythrobacter sp. (strain OCh 114)).